The following is a 168-amino-acid chain: Large ribosomal subunit protein uL5 (168 aa).

The protein belongs to the universal ribosomal protein uL5 family. Part of the 50S ribosomal subunit; contacts the 5S rRNA and probably tRNA. Forms a bridge to the 30S subunit in the 70S ribosome.

Its function is as follows. This is one of the proteins that bind and probably mediate the attachment of the 5S RNA into the large ribosomal subunit, where it forms part of the central protuberance. In the 70S ribosome it contacts protein S13 of the 30S subunit (bridge B1b), connecting the 2 subunits; this bridge is implicated in subunit movement. May contact the P site tRNA; the 5S rRNA and some of its associated proteins might help stabilize positioning of ribosome-bound tRNAs. This is Large ribosomal subunit protein uL5 from Methanosphaera stadtmanae (strain ATCC 43021 / DSM 3091 / JCM 11832 / MCB-3).